Reading from the N-terminus, the 309-residue chain is Aspartate carbamoyltransferase catalytic subunit (309 aa).

2 residues coordinate carbamoyl phosphate: Arg-55 and Thr-56. Lys-85 contributes to the L-aspartate binding site. Residues Arg-106, His-135, and Gln-138 each coordinate carbamoyl phosphate. Residues Arg-168 and Arg-230 each coordinate L-aspartate. Leu-268 and Pro-269 together coordinate carbamoyl phosphate.

This sequence belongs to the aspartate/ornithine carbamoyltransferase superfamily. ATCase family. Heterododecamer (2C3:3R2) of six catalytic PyrB chains organized as two trimers (C3), and six regulatory PyrI chains organized as three dimers (R2).

The catalysed reaction is carbamoyl phosphate + L-aspartate = N-carbamoyl-L-aspartate + phosphate + H(+). It participates in pyrimidine metabolism; UMP biosynthesis via de novo pathway; (S)-dihydroorotate from bicarbonate: step 2/3. Catalyzes the condensation of carbamoyl phosphate and aspartate to form carbamoyl aspartate and inorganic phosphate, the committed step in the de novo pyrimidine nucleotide biosynthesis pathway. This chain is Aspartate carbamoyltransferase catalytic subunit, found in Aliivibrio fischeri (strain ATCC 700601 / ES114) (Vibrio fischeri).